The primary structure comprises 254 residues: Nickel import ATP-binding protein NikD (254 aa).

The ABC transporter domain occupies 2–241 (PQQIELRNIA…PKHTVTRSLV (240 aa)). 36-43 (GGSGSGKS) lines the ATP pocket.

Belongs to the ABC transporter superfamily. Nickel importer (TC 3.A.1.5.3) family. The complex is composed of two ATP-binding proteins (NikD and NikE), two transmembrane proteins (NikB and NikC) and a solute-binding protein (NikA).

It localises to the cell inner membrane. It carries out the reaction Ni(2+)(out) + ATP + H2O = Ni(2+)(in) + ADP + phosphate + H(+). In terms of biological role, part of the ABC transporter complex NikABCDE involved in nickel import. Responsible for energy coupling to the transport system. The polypeptide is Nickel import ATP-binding protein NikD (Shigella flexneri serotype 5b (strain 8401)).